A 176-amino-acid chain; its full sequence is MAIRLEDKKAIVAEVNETASKALSLVIADYRGVTSNKMSELRAKARAESVSLRVVRNTLARRAVEGTEYECAREAFVGPTILAFSMEDPGAAARLLKDYAKENDKFEIKALAVGGEMLGADQIDRLAKLPTRDQALAMLMSVMQAPVTKLARTLNEIPSKVTRAVAAVRDKKQEAA.

Belongs to the universal ribosomal protein uL10 family. Part of the ribosomal stalk of the 50S ribosomal subunit. The N-terminus interacts with L11 and the large rRNA to form the base of the stalk. The C-terminus forms an elongated spine to which L12 dimers bind in a sequential fashion forming a multimeric L10(L12)X complex.

Functionally, forms part of the ribosomal stalk, playing a central role in the interaction of the ribosome with GTP-bound translation factors. This is Large ribosomal subunit protein uL10 from Hahella chejuensis (strain KCTC 2396).